We begin with the raw amino-acid sequence, 301 residues long: Quinolinate synthase (301 aa).

The iminosuccinate site is built by H21 and S38. C83 is a [4Fe-4S] cluster binding site. Iminosuccinate contacts are provided by residues 109–111 and S126; that span reads YIN. C169 is a [4Fe-4S] cluster binding site. Residues 195–197 and T212 each bind iminosuccinate; that span reads HPE. A [4Fe-4S] cluster-binding site is contributed by C257.

Belongs to the quinolinate synthase family. Type 2 subfamily. The cofactor is [4Fe-4S] cluster.

It is found in the cytoplasm. The enzyme catalyses iminosuccinate + dihydroxyacetone phosphate = quinolinate + phosphate + 2 H2O + H(+). Its pathway is cofactor biosynthesis; NAD(+) biosynthesis; quinolinate from iminoaspartate: step 1/1. Its function is as follows. Catalyzes the condensation of iminoaspartate with dihydroxyacetone phosphate to form quinolinate. The sequence is that of Quinolinate synthase from Clostridium perfringens (strain SM101 / Type A).